A 163-amino-acid polypeptide reads, in one-letter code: Phospholipase A2 homolog 3 (163 aa).

A signal peptide spans Met-1–Gln-43. 6 cysteine pairs are disulfide-bonded: Cys-55-Cys-83, Cys-59-Cys-89, Cys-64-Cys-137, Cys-76-Cys-96, Cys-95-Cys-121, and Cys-102-Cys-114. The Ca(2+) site is built by Tyr-75, Gly-77, and Tyr-80. His-99 is an active-site residue. Residue Asp-100 participates in Ca(2+) binding.

This sequence belongs to the phospholipase A2 family. Ca(2+) is required as a cofactor.

It is found in the secreted. The catalysed reaction is a 1,2-diacyl-sn-glycero-3-phosphocholine + H2O = a 1-acyl-sn-glycero-3-phosphocholine + a fatty acid + H(+). Its activity is regulated as follows. Inhibited by EGTA. Its function is as follows. PA2 catalyzes the calcium-dependent hydrolysis of the 2-acyl groups in 3-sn-phosphoglycerides. Releases lysophospholipids (LPLs) and free fatty acids (FFAs) from membrane phospholipids in response to hormones and other external stimuli. The sequence is that of Phospholipase A2 homolog 3 (PLA2-III) from Oryza sativa subsp. japonica (Rice).